The sequence spans 93 residues: Probable endoribonuclease MazF1 (93 aa).

Belongs to the PemK/MazF family. Forms a complex with cognate antitoxin MazE1.

In terms of biological role, toxic component of a type II toxin-antitoxin (TA) system, its cognate antitoxin is MazE1. Probably an endoribonuclease. This Mycobacterium tuberculosis (strain ATCC 25618 / H37Rv) protein is Probable endoribonuclease MazF1 (mazF1).